Consider the following 559-residue polypeptide: DNA ligase (559 aa).

Glu247 lines the ATP pocket. Lys249 functions as the N6-AMP-lysine intermediate in the catalytic mechanism. Positions 254, 269, 299, 339, 414, and 420 each coordinate ATP.

Belongs to the ATP-dependent DNA ligase family. Mg(2+) serves as cofactor.

The catalysed reaction is ATP + (deoxyribonucleotide)n-3'-hydroxyl + 5'-phospho-(deoxyribonucleotide)m = (deoxyribonucleotide)n+m + AMP + diphosphate.. Its function is as follows. DNA ligase that seals nicks in double-stranded DNA during DNA replication, DNA recombination and DNA repair. The protein is DNA ligase of Pyrococcus abyssi.